The following is a 333-amino-acid chain: Taste receptor type 2 member 38 (333 aa).

Topologically, residues 1 to 17 (MLTLTRICAVSYEVRST) are extracellular. A helical transmembrane segment spans residues 18-38 (FLFISVLEFAVGFLTNAFIFL). Residues 39 to 55 (VNFWDVVKRQPLSNSDC) are Cytoplasmic-facing. A helical membrane pass occupies residues 56–76 (VLLCLSISRLFLHGLLFLSAI). The Extracellular segment spans residues 77–94 (QLTHFQKLSEPLNHSYQA). The helical transmembrane segment at 95–115 (IIMLWIIANQANLWLAACLSL) threads the bilayer. The Cytoplasmic portion of the chain corresponds to 116–142 (LYCSKLIRFSHTFLICLASWVSRKISQ). The helical transmembrane segment at 143 to 163 (MLLGIILCSCICTVLCVWCFF) threads the bilayer. Residues 164–190 (SRPHFTVTTFLFMNNNTRLNWQIKDLN) lie on the Extracellular side of the membrane. A glycan (N-linked (GlcNAc...) asparagine) is linked at N178. Residues 191–211 (LFYSFLFCYLWSVPPFLLFLV) traverse the membrane as a helical segment. At 212–251 (SSGMLTVSLGRHMRTMKVYTRDSRDPSLEAHIKALKSLVS) the chain is on the cytoplasmic side. Residues 252–272 (FFCFFVISSCAAFISVPLLIL) traverse the membrane as a helical segment. Over 273–276 (WRNK) the chain is Extracellular. A helical transmembrane segment spans residues 277-297 (IGVMVCVGIMAACPSGHAAVL). Residues 298–333 (ISGNATLRRAVTTILLWAQSSMKVRADHKADSRTLC) lie on the Cytoplasmic side of the membrane.

This sequence belongs to the G-protein coupled receptor T2R family.

Its subcellular location is the membrane. In terms of biological role, receptor that may play a role in the perception of bitterness and is gustducin-linked. May play a role in sensing the chemical composition of the gastrointestinal content. The activity of this receptor may stimulate alpha gustducin, mediate PLC-beta-2 activation and lead to the gating of TRPM5. The protein is Taste receptor type 2 member 38 (TAS2R38) of Pongo pygmaeus (Bornean orangutan).